The sequence spans 296 residues: 4-hydroxybenzoate octaprenyltransferase (296 aa).

9 helical membrane-spanning segments follow: residues P28–G48, L52–I72, A102–S122, T123–F140, Y146–A166, G169–Y189, V219–F239, L241–W261, and F275–L295.

It belongs to the UbiA prenyltransferase family. The cofactor is Mg(2+).

The protein localises to the cell inner membrane. The enzyme catalyses all-trans-octaprenyl diphosphate + 4-hydroxybenzoate = 4-hydroxy-3-(all-trans-octaprenyl)benzoate + diphosphate. The protein operates within cofactor biosynthesis; ubiquinone biosynthesis. Functionally, catalyzes the prenylation of para-hydroxybenzoate (PHB) with an all-trans polyprenyl group. Mediates the second step in the final reaction sequence of ubiquinone-8 (UQ-8) biosynthesis, which is the condensation of the polyisoprenoid side chain with PHB, generating the first membrane-bound Q intermediate 3-octaprenyl-4-hydroxybenzoate. The protein is 4-hydroxybenzoate octaprenyltransferase of Pseudomonas syringae pv. tomato (strain ATCC BAA-871 / DC3000).